Here is a 501-residue protein sequence, read N- to C-terminus: Acetyl-coenzyme A carboxylase carboxyl transferase subunit beta, chloroplastic (501 aa).

A CoA carboxyltransferase N-terminal domain is found at 231–501; the sequence is LWIECENCYG…LIQNEKESRS (271 aa). Zn(2+) contacts are provided by Cys235, Cys238, Cys254, and Cys257. A C4-type zinc finger spans residues 235–257; sequence CENCYGLNYKKILKSKMNICEHC.

The protein belongs to the AccD/PCCB family. Acetyl-CoA carboxylase is a heterohexamer composed of biotin carboxyl carrier protein, biotin carboxylase and 2 subunits each of ACCase subunit alpha and ACCase plastid-coded subunit beta (accD). It depends on Zn(2+) as a cofactor.

It localises to the plastid. It is found in the chloroplast stroma. It catalyses the reaction N(6)-carboxybiotinyl-L-lysyl-[protein] + acetyl-CoA = N(6)-biotinyl-L-lysyl-[protein] + malonyl-CoA. It functions in the pathway lipid metabolism; malonyl-CoA biosynthesis; malonyl-CoA from acetyl-CoA: step 1/1. Its function is as follows. Component of the acetyl coenzyme A carboxylase (ACC) complex. Biotin carboxylase (BC) catalyzes the carboxylation of biotin on its carrier protein (BCCP) and then the CO(2) group is transferred by the transcarboxylase to acetyl-CoA to form malonyl-CoA. This Lotus japonicus (Lotus corniculatus var. japonicus) protein is Acetyl-coenzyme A carboxylase carboxyl transferase subunit beta, chloroplastic.